The following is a 468-amino-acid chain: Heat stress transcription factor A-1e (468 aa).

A DNA-binding region spans residues 21–115 (IPPFLSKTYD…ILKSIVRRKP (95 aa)). Residues 133-199 (ACVEVGKFGL…QMMSFLAKAV (67 aa)) form a hydrophobic repeat HR-A/B region. Over residues 211 to 220 (QSNEANQHIS) the composition is skewed to polar residues. Disordered stretches follow at residues 211-244 (QSNE…VNGL) and 268-309 (QMSN…PEVT). Residues 223–227 (NKKRR) carry the Nuclear localization signal motif. Positions 277–305 (SLSSNNGSFLLGDVPNSNISDNGSSSNGS) are enriched in low complexity. Residues 402 to 411 (DSFWEQFIGE) carry the AHA motif. The Nuclear export signal signature appears at 454 to 461 (LTEQMGLL).

Belongs to the HSF family. Class A subfamily. As to quaternary structure, homotrimer. Post-translationally, exhibits temperature-dependent phosphorylation.

Its subcellular location is the cytoplasm. It is found in the nucleus. Its function is as follows. Transcriptional activator that specifically binds DNA sequence 5'-AGAAnnTTCT-3' known as heat shock promoter elements (HSE). This chain is Heat stress transcription factor A-1e (HSFA1E), found in Arabidopsis thaliana (Mouse-ear cress).